An 881-amino-acid polypeptide reads, in one-letter code: Ent-kaurene synthase CPS/KS, chloroplastic (881 aa).

Residues Met1–Gln41 constitute a chloroplast transit peptide. Mg(2+) contacts are provided by Asp417, Asp419, Asp635, Asp639, Asn778, Asp779, and Glu786. Positions Asp417–Ala422 match the DXDDTA motif motif. The short motif at Asp635 to Asp639 is the DDXXD motif element.

The protein belongs to the terpene synthase family. The cofactor is Mg(2+).

The protein localises to the plastid. It localises to the chloroplast. The catalysed reaction is (2E,6E,10E)-geranylgeranyl diphosphate = ent-copalyl diphosphate. It carries out the reaction ent-copalyl diphosphate = ent-kaur-16-ene + diphosphate. It catalyses the reaction ent-copalyl diphosphate = ent-beyerene + diphosphate. The enzyme catalyses ent-copalyl diphosphate = ent-sandaracopimara-8(14),15-diene + diphosphate. The catalysed reaction is ent-copalyl diphosphate = ent-isokaurene + diphosphate. It carries out the reaction ent-copalyl diphosphate + H2O = 16alpha-hydroxy-ent-kaurene + diphosphate. The protein operates within secondary metabolite biosynthesis; terpenoid biosynthesis. Bifunctional copalyl diphosphate/kaurene synthase involved in the biosynthesis of labdane-related diterpenoids (LRDs) natural products such as ent-beyerene, an antimicrobial compound. Supports the conversion of geranylgeranyl diphosphate (GGPP) to ent-copalyl diphosphate (ent-CDP). Also catalyzes the subsequent cyclization of ent-CDP into many diterpenes, including ent-kaur-16-ene as the major product, and ent-beyerene, ent-sandaracopimaradiene, ent-kaur-15-ene (ent-isokaurene) and 16-hydroxy-ent-kaurene (ent-16-alpha-hydroxy-kaurene) as minor products. This is Ent-kaurene synthase CPS/KS, chloroplastic from Physcomitrium patens (Spreading-leaved earth moss).